The chain runs to 352 residues: MSASAIATTRHDWSLAEVKALFQQPFNDLLFQAQTMHRAYFDPNRVQVSTLLSIKTGACPEDCKYCPQSGHYNTGLEKQKLMEVQKVLEEAARAKAIGSTRFCMGAAWKHPSAKDMPYVLEMVKGVKAMGLETCMTLGKLDQEQTLALAQAGLDYYNHNLDTSPEFYGSIITTRTYSERLQTLAYVRDAGMKICSGGILGMGESLDDRAGLLIQLANLPEHPESVPINMLVKVAGTPLAEEEDVDPFDFIRMLAVARILMPKSHVRLSAGREQMNEQMQALAFMAGANSIFYGEKLLTTANPQADKDMQLFARLGIKPEAREEHADEVHQAAIEQALVEQRNSELFYDAASA.

In terms of domain architecture, Radical SAM core spans 44 to 262 (NRVQVSTLLS…LAVARILMPK (219 aa)). Residues cysteine 59, cysteine 63, and cysteine 66 each contribute to the [4Fe-4S] cluster site. [2Fe-2S] cluster is bound by residues cysteine 103, cysteine 134, cysteine 194, and arginine 266.

This sequence belongs to the radical SAM superfamily. Biotin synthase family. Homodimer. It depends on [4Fe-4S] cluster as a cofactor. [2Fe-2S] cluster is required as a cofactor.

The catalysed reaction is (4R,5S)-dethiobiotin + (sulfur carrier)-SH + 2 reduced [2Fe-2S]-[ferredoxin] + 2 S-adenosyl-L-methionine = (sulfur carrier)-H + biotin + 2 5'-deoxyadenosine + 2 L-methionine + 2 oxidized [2Fe-2S]-[ferredoxin]. It participates in cofactor biosynthesis; biotin biosynthesis; biotin from 7,8-diaminononanoate: step 2/2. In terms of biological role, catalyzes the conversion of dethiobiotin (DTB) to biotin by the insertion of a sulfur atom into dethiobiotin via a radical-based mechanism. This is Biotin synthase from Pseudomonas entomophila (strain L48).